Consider the following 365-residue polypeptide: 3-isopropylmalate dehydrogenase (365 aa).

Residues Arg-96, Arg-106, Arg-134, and Asp-224 each contribute to the substrate site. 3 residues coordinate Mg(2+): Asp-224, Asp-248, and Asp-252. 288-300 (GSAPTIAKQNIAN) is a binding site for NAD(+).

It belongs to the isocitrate and isopropylmalate dehydrogenases family. LeuB type 1 subfamily. Homodimer. Mg(2+) is required as a cofactor. It depends on Mn(2+) as a cofactor.

The protein resides in the cytoplasm. It carries out the reaction (2R,3S)-3-isopropylmalate + NAD(+) = 4-methyl-2-oxopentanoate + CO2 + NADH. It participates in amino-acid biosynthesis; L-leucine biosynthesis; L-leucine from 3-methyl-2-oxobutanoate: step 3/4. In terms of biological role, catalyzes the oxidation of 3-carboxy-2-hydroxy-4-methylpentanoate (3-isopropylmalate) to 3-carboxy-4-methyl-2-oxopentanoate. The product decarboxylates to 4-methyl-2 oxopentanoate. The protein is 3-isopropylmalate dehydrogenase of Dehalococcoides mccartyi (strain CBDB1).